We begin with the raw amino-acid sequence, 123 residues long: Gamma-synuclein (123 aa).

Tandem repeats lie at residues 20 to 30 and 31 to 41. A 4 X 11 AA tandem repeats of [EGSA]-K-T-K-[EQ]-[GQ]-V-X(4) region spans residues 20–67; sequence EKTKQGVTEAAEKTKEGVMYVGTKTKGERGTSVTSVAEKTKEQANAVS. The 3; approximate repeat unit spans residues 42–56; it reads TKTKGERGTSVTSVA. Residues 57–67 form repeat 4; it reads EKTKEQANAVS. A phosphoserine mark is found at serine 67 and serine 72. Positions 93–123 are disordered; the sequence is GVVRKEDLEPPAQDQEAKEQEEGEEAKSGGD. Residues 107–123 are compositionally biased toward basic and acidic residues; it reads QEAKEQEEGEEAKSGGD. Position 120 is a phosphoserine; by BARK1, CaMK2 and CK2 (serine 120).

This sequence belongs to the synuclein family. May be a centrosome-associated protein. Interacts with MYOC; affects its secretion and its aggregation. Post-translationally, phosphorylated. Phosphorylation by GRK5 appears to occur on residues distinct from the residue phosphorylated by other kinases. As to expression, specifically expressed in the peripheral nervous system. High expression in motoneurons of the brainstem. Also found in neurons of many other brain regions including the cerebellar cortex, thalamus, hypothalamus and CA1, CA2, CA3 and CA4 regions of the hippocampus.

The protein localises to the cytoplasm. It localises to the perinuclear region. Its subcellular location is the cytoskeleton. It is found in the microtubule organizing center. The protein resides in the centrosome. The protein localises to the spindle. In terms of biological role, plays a role in neurofilament network integrity. May be involved in modulating axonal architecture during development and in the adult. In vitro, increases the susceptibility of neurofilament-H to calcium-dependent proteases. May also function in modulating the keratin network in skin. Activates the MAPK and Elk-1 signal transduction pathway. The polypeptide is Gamma-synuclein (Sncg) (Rattus norvegicus (Rat)).